The following is a 314-amino-acid chain: Olfactory receptor 5P62 (314 aa).

The Extracellular portion of the chain corresponds to 1–28 (MAFIYNGSQTTVTEFILLGLTDDPVLKV). An N-linked (GlcNAc...) asparagine glycan is attached at asparagine 6. Residues 29-49 (ILFCIILCIYLVTVFGNLSTI) traverse the membrane as a helical segment. Residues 50 to 57 (LLIGVSSK) are Cytoplasmic-facing. The helical transmembrane segment at 58–78 (LHHPMYFFLSHLASVDMGLSS) threads the bilayer. Residues 79-102 (SVTPNMLVNFLTEKNTISYLGCGI) lie on the Extracellular side of the membrane. The cysteines at positions 100 and 192 are disulfide-linked. A helical transmembrane segment spans residues 103–123 (QLSSAAFFGAVEFFLLAAMAY). Residues 124 to 136 (DRLVAICNPLLYS) lie on the Cytoplasmic side of the membrane. A helical membrane pass occupies residues 137–157 (TKMSSQVCIQLVAGSYVGGFL). Residues 158–199 (NASFVTHFFFSFLFCGPNRVNHFFCDLSPMMELSCSDVSISE) are Extracellular-facing. Residues 200–220 (IVISFSAGSFTMTTLFVIVIP) form a helical membrane-spanning segment. The Cytoplasmic portion of the chain corresponds to 221-240 (YFYIFITILKIRSTEGRQKA). The chain crosses the membrane as a helical span at residues 241 to 261 (FSTCTSHLTAVTLYYGTIIFI). Topologically, residues 262-274 (YVMPKSTYSRDQN) are extracellular. The chain crosses the membrane as a helical span at residues 275-295 (KVVSLFYMLVIPVLNPLIYSL). The Cytoplasmic portion of the chain corresponds to 296 to 314 (RNNEIKDALKRQFYRKTLL).

This sequence belongs to the G-protein coupled receptor 1 family.

The protein localises to the cell membrane. In terms of biological role, potential odorant receptor. The chain is Olfactory receptor 5P62 from Mus musculus (Mouse).